The following is a 396-amino-acid chain: Tryptophan synthase beta chain (396 aa).

The residue at position 88 (Lys88) is an N6-(pyridoxal phosphate)lysine.

It belongs to the TrpB family. Tetramer of two alpha and two beta chains. Pyridoxal 5'-phosphate is required as a cofactor.

It catalyses the reaction (1S,2R)-1-C-(indol-3-yl)glycerol 3-phosphate + L-serine = D-glyceraldehyde 3-phosphate + L-tryptophan + H2O. It participates in amino-acid biosynthesis; L-tryptophan biosynthesis; L-tryptophan from chorismate: step 5/5. Its function is as follows. The beta subunit is responsible for the synthesis of L-tryptophan from indole and L-serine. The chain is Tryptophan synthase beta chain from Actinobacillus pleuropneumoniae serotype 5b (strain L20).